A 321-amino-acid polypeptide reads, in one-letter code: Fructose-1,6-bisphosphatase 2 class 2 (321 aa).

Residues Asp32, Glu56, Asp84, and Glu87 each contribute to the Mn(2+) site. Residues Glu87 to Thr89, Tyr118, Lys163 to Arg165, Asp185 to Asp187, and Gly209 each bind substrate. Glu212 is a Mn(2+) binding site.

It belongs to the FBPase class 2 family. As to quaternary structure, homodimer. Requires Mn(2+) as cofactor.

The enzyme catalyses beta-D-fructose 1,6-bisphosphate + H2O = beta-D-fructose 6-phosphate + phosphate. Competitively inhibited by low concentrations of phosphate (IC50 of 1.2 mM) and is also sensitive to Li(+) (IC50 of 15.8 mM). Also inhibited by 1 mM ATP or 50 mM KCl (60% and 20% residual activity, respectively). Slightly activated (40-50%) by the addition of 1 mM dithiothreitol in vitro. Its function is as follows. Catalyzes the hydrolysis of fructose 1,6-bisphosphate to fructose 6-phosphate. Also displays a low activity toward glucose 1,6-bisphosphate, and no activity against ribulose 1,5-bisphosphate, fructose 2,6-bisphosphate, or fructose 1-phosphate. This chain is Fructose-1,6-bisphosphatase 2 class 2 (yggF), found in Escherichia coli (strain K12).